The following is a 455-amino-acid chain: uncharacterized protein (455 aa).

Residues 1–20 (MGCCLSKKPSPSLPSSVKPS) are compositionally biased toward low complexity. Disordered stretches follow at residues 1-234 (MGCC…IPAT) and 258-304 (RIAA…QNTK). Composition is skewed to basic and acidic residues over residues 35-46 (EEAKPKSEKLNQ), 61-75 (SHEERSKKTESDKDS), 129-143 (RSFDFDQNERIRGGD), 156-166 (RGVERVHGSPR), and 173-186 (PSRERERSGSRERG). Positions 213–224 (SCGSSVNSSNNR) are enriched in polar residues. Residues 260 to 271 (AASPRSKSPARA) are compositionally biased toward low complexity.

This is an uncharacterized protein from Arabidopsis thaliana (Mouse-ear cress).